Here is a 357-residue protein sequence, read N- to C-terminus: MKKIAVLAGDGIGPEVMEQALKVLVAVQKKFGFELSFQHADVGGAAIDSHGVALPESTLTLCAESDAILFGSVGGPKWEHLPPAEQPERAALLPLRKHFDLFCNYRPARVFKSLTAACPLRADIIGDGFDILCVRELTSGIYFGTPKGREGAGEDEYAYDTMGYKRSEVRRIAHMAFAAARQRSGKVTSVDKANVLTTMVLWREVVLEVAKEYPDVKLNHIYVDNATMQLVRDPHQFDVMLCGNMFGDIISDEAAMLTGSMGLLASASLNTENFGLFEPAGGSAPDIAGQGIANPIAEILSAAMMLRYSLGYGEAADAIEAAVEKTLDRGICTADIAVDRSQAVNTAEMGDAIVAAL.

NAD(+) is bound at residue 75–88 (GPKWEHLPPAEQPE). Residues Arg96, Arg106, Arg135, and Asp224 each coordinate substrate. Residues Asp224, Asp248, and Asp252 each coordinate Mg(2+). Residue 282-294 (GSAPDIAGQGIAN) coordinates NAD(+).

This sequence belongs to the isocitrate and isopropylmalate dehydrogenases family. LeuB type 1 subfamily. In terms of assembly, homodimer. It depends on Mg(2+) as a cofactor. Mn(2+) is required as a cofactor.

It is found in the cytoplasm. The catalysed reaction is (2R,3S)-3-isopropylmalate + NAD(+) = 4-methyl-2-oxopentanoate + CO2 + NADH. Its pathway is amino-acid biosynthesis; L-leucine biosynthesis; L-leucine from 3-methyl-2-oxobutanoate: step 3/4. Functionally, catalyzes the oxidation of 3-carboxy-2-hydroxy-4-methylpentanoate (3-isopropylmalate) to 3-carboxy-4-methyl-2-oxopentanoate. The product decarboxylates to 4-methyl-2 oxopentanoate. This Desulfotalea psychrophila (strain LSv54 / DSM 12343) protein is 3-isopropylmalate dehydrogenase.